Consider the following 720-residue polypeptide: Biotin biosynthesis bifunctional protein BioWF (720 aa).

Residues 1 to 39 are disordered; that stretch reads MRFSIKMRASARVSSSPSTSDGSSGDHTESRDRADRHIS. Residues 8-23 show a composition bias toward low complexity; sequence RASARVSSSPSTSDGS. Basic and acidic residues predominate over residues 24-39; sequence SGDHTESRDRADRHIS. R314 is a binding site for substrate. 401–402 contacts pyridoxal 5'-phosphate; that stretch reads GY. H439 serves as a coordination point for substrate. Pyridoxal 5'-phosphate-binding positions include S488, 513–516, and 564–567; these read DDAH and TASK. An N6-(pyridoxal phosphate)lysine modification is found at K567. Residue T684 participates in substrate binding.

It in the N-terminal section; belongs to the BioW family. This sequence in the C-terminal section; belongs to the class-II pyridoxal-phosphate-dependent aminotransferase family. BioF subfamily. Homodimer. Mg(2+) is required as a cofactor. It depends on pyridoxal 5'-phosphate as a cofactor.

It carries out the reaction heptanedioate + ATP + CoA = 6-carboxyhexanoyl-CoA + AMP + diphosphate. The catalysed reaction is 6-carboxyhexanoyl-[ACP] + L-alanine + H(+) = (8S)-8-amino-7-oxononanoate + holo-[ACP] + CO2. It functions in the pathway metabolic intermediate metabolism; pimeloyl-CoA biosynthesis; pimeloyl-CoA from pimelate: step 1/1. Its pathway is cofactor biosynthesis; biotin biosynthesis. Its function is as follows. Catalyzes both the decarboxylative condensation of pimeloyl-[acyl-carrier protein] and L-alanine to produce 8-amino-7-oxononanoate (AON), [acyl-carrier protein], and carbon dioxide, and the transformation of pimelate into pimeloyl-CoA with concomitant hydrolysis of ATP to AMP. The protein is Biotin biosynthesis bifunctional protein BioWF (bioWF) of Corynebacterium kroppenstedtii (strain DSM 44385 / JCM 11950 / CIP 105744 / CCUG 35717).